The primary structure comprises 268 residues: MSADSRAEVVLHAEAVTKRFGATLALDAVSMTVHRSELVVLLGLSGSGKSTLLRCFNGLHPVTSGAVTVAGTRVDTAPRATVRALRRDIGFVFQQFNLVGRLSCLDNVLLGGLARLRLPRYGALTYPKRMRAEAVAHLDRVGLADLAHRRTDTLSGGQQQRVAIARTLMQRPKLVLADEPVASLDPENAGVVMDLLFRICLEDNLTVVCTLHQVDLALGWAHRVIGLRDGRKVFDRPAAGLSRDEVMAIYQRAEVTRSAPAGLAAGAL.

An ABC transporter domain is found at 11–254 (LHAEAVTKRF…EVMAIYQRAE (244 aa)). 43 to 50 (GLSGSGKS) provides a ligand contact to ATP.

The protein belongs to the ABC transporter superfamily. Phosphonates importer (TC 3.A.1.9.1) family. In terms of assembly, the complex is composed of two ATP-binding proteins (PhnC), two transmembrane proteins (PhnE) and a solute-binding protein (PhnD).

The protein resides in the cell membrane. It catalyses the reaction phosphonate(out) + ATP + H2O = phosphonate(in) + ADP + phosphate + H(+). In terms of biological role, part of the ABC transporter complex PhnCDE involved in phosphonates import. Responsible for energy coupling to the transport system. In Nocardia farcinica (strain IFM 10152), this protein is Phosphonates import ATP-binding protein PhnC.